Consider the following 273-residue polypeptide: Urease accessory protein UreD (273 aa).

The protein belongs to the UreD family. UreD, UreF and UreG form a complex that acts as a GTP-hydrolysis-dependent molecular chaperone, activating the urease apoprotein by helping to assemble the nickel containing metallocenter of UreC. The UreE protein probably delivers the nickel.

It localises to the cytoplasm. Required for maturation of urease via the functional incorporation of the urease nickel metallocenter. This is Urease accessory protein UreD from Bacillus cereus (strain ATCC 10987 / NRS 248).